The following is a 343-amino-acid chain: Methionine import ATP-binding protein MetN 1 (343 aa).

The ABC transporter domain maps to 2–241 (IKLTHISKVF…PKTPLAQQFI (240 aa)). 38 to 45 (GASGAGKS) provides a ligand contact to ATP.

Belongs to the ABC transporter superfamily. Methionine importer (TC 3.A.1.24) family. In terms of assembly, the complex is composed of two ATP-binding proteins (MetN), two transmembrane proteins (MetI) and a solute-binding protein (MetQ).

The protein localises to the cell inner membrane. The catalysed reaction is L-methionine(out) + ATP + H2O = L-methionine(in) + ADP + phosphate + H(+). The enzyme catalyses D-methionine(out) + ATP + H2O = D-methionine(in) + ADP + phosphate + H(+). Part of the ABC transporter complex MetNIQ involved in methionine import. Responsible for energy coupling to the transport system. The polypeptide is Methionine import ATP-binding protein MetN 1 (Yersinia pestis bv. Antiqua (strain Antiqua)).